A 330-amino-acid polypeptide reads, in one-letter code: Diacylglycerol acyltransferase/mycolyltransferase Ag85B (330 aa).

A signal peptide spans 1–40; the sequence is MTDLSEKVRAWGRRLVVGAAAAATLPGLIGIAGGAATANA. 82-83 serves as a coordination point for substrate; that stretch reads LR. The fibronectin-binding stretch occupies residues 98–108; that stretch reads FEWYYQSGLSV. A disulfide bond links C127 and C132. Residues S166 and D194 each contribute to the substrate site. Residue S166 is the Nucleophile of the active site. E270 is a catalytic residue. Residues 272–275, K279, and 302–304 each bind substrate; these read FVRS and HSW. H302 is an active-site residue.

The protein belongs to the mycobacterial A85 antigen family.

The protein localises to the secreted. The catalysed reaction is 2 alpha,alpha'-trehalose 6-mycolate = alpha,alpha'-trehalose 6,6'-bismycolate + alpha,alpha-trehalose. It catalyses the reaction an acyl-CoA + a 1,2-diacyl-sn-glycerol = a triacyl-sn-glycerol + CoA. Its function is as follows. The antigen 85 proteins (FbpA, FbpB, FbpC) are responsible for the high affinity of mycobacteria for fibronectin, a large adhesive glycoprotein, which facilitates the attachment of M.tuberculosis to murine alveolar macrophages (AMs). They also help to maintain the integrity of the cell wall by catalyzing the transfer of mycolic acids to cell wall arabinogalactan and through the synthesis of alpha,alpha-trehalose dimycolate (TDM, cord factor). They catalyze the transfer of a mycoloyl residue from one molecule of alpha,alpha-trehalose monomycolate (TMM) to another TMM, leading to the formation of TDM. The sequence is that of Diacylglycerol acyltransferase/mycolyltransferase Ag85B (fbpB) from Mycobacterium intracellulare (strain ATCC 13950 / DSM 43223 / JCM 6384 / NCTC 13025 / 3600).